The sequence spans 457 residues: Acetylcholine receptor subunit alpha-1-A (457 aa).

Positions 1-20 (MDFVLTRLILLFLAATIIYS) are cleaved as a signal peptide. The Extracellular segment spans residues 21 to 230 (SEDESRLIND…ITYHFLLQRL (210 aa)). 2 disulfide bridges follow: Cys148–Cys162 and Cys212–Cys213. A glycan (N-linked (GlcNAc...) asparagine) is linked at Asn161. Transmembrane regions (helical) follow at residues 231-255 (PLYF…VFYL), 263-281 (ITLS…LVIV), and 297-316 (YMLF…VIVI). The Cytoplasmic segment spans residues 317–428 (NTHHRSPSTH…WKFVAMVLDH (112 aa)). A helical membrane pass occupies residues 429–447 (LLLAVFMIVCIIGTLAIFA).

This sequence belongs to the ligand-gated ion channel (TC 1.A.9) family. Acetylcholine receptor (TC 1.A.9.1) subfamily. Alpha-1/CHRNA1 sub-subfamily. In terms of assembly, one of the alpha chains that assemble within the acetylcholine receptor, a pentamer of two alpha chains, a beta, a delta, and a gamma or epsilon chains. As to expression, oocytes.

The protein localises to the postsynaptic cell membrane. It localises to the cell membrane. It carries out the reaction K(+)(in) = K(+)(out). The catalysed reaction is Na(+)(in) = Na(+)(out). Upon acetylcholine binding, the AChR responds by an extensive change in conformation that affects all subunits and leads to opening of an ion-conducting channel across the plasma membrane. In Xenopus laevis (African clawed frog), this protein is Acetylcholine receptor subunit alpha-1-A (chrna1-a).